An 86-amino-acid chain; its full sequence is MAAEDTPQDIADRERIFKRFDTNGDGKISSSELGDALKTLGSVTPDEVRRMMAEIDTDGDGFISFDEFTDFARANRGLVKDVSKIF.

EF-hand domains lie at 8 to 43 (QDIA…LGSV) and 43 to 78 (VTPD…NRGL). The Ca(2+) site is built by D21, N23, D25, K27, E32, D56, D58, D60, and E67.

The sequence is that of Polcalcin Che a 3 from Chenopodium album (Fat hen).